The primary structure comprises 479 residues: Aspartyl/glutamyl-tRNA(Asn/Gln) amidotransferase subunit B (479 aa).

The protein belongs to the GatB/GatE family. GatB subfamily. Heterotrimer of A, B and C subunits.

It carries out the reaction L-glutamyl-tRNA(Gln) + L-glutamine + ATP + H2O = L-glutaminyl-tRNA(Gln) + L-glutamate + ADP + phosphate + H(+). The enzyme catalyses L-aspartyl-tRNA(Asn) + L-glutamine + ATP + H2O = L-asparaginyl-tRNA(Asn) + L-glutamate + ADP + phosphate + 2 H(+). Its function is as follows. Allows the formation of correctly charged Asn-tRNA(Asn) or Gln-tRNA(Gln) through the transamidation of misacylated Asp-tRNA(Asn) or Glu-tRNA(Gln) in organisms which lack either or both of asparaginyl-tRNA or glutaminyl-tRNA synthetases. The reaction takes place in the presence of glutamine and ATP through an activated phospho-Asp-tRNA(Asn) or phospho-Glu-tRNA(Gln). The sequence is that of Aspartyl/glutamyl-tRNA(Asn/Gln) amidotransferase subunit B from Streptococcus mutans serotype c (strain ATCC 700610 / UA159).